Consider the following 284-residue polypeptide: Tropomyosin (284 aa).

Positions 1–38 (MEAIKKKMQAMKLEKDNAVDRAETAEQQSREAALRAEK) are disordered. Positions 1 to 284 (MEAIKKKMQA…DQTFSELTGY (284 aa)) form a coiled coil. The span at 12-38 (KLEKDNAVDRAETAEQQSREAALRAEK) shows a compositional bias: basic and acidic residues.

It belongs to the tropomyosin family. In terms of assembly, homodimer.

Its function is as follows. Tropomyosin, in association with the troponin complex, plays a central role in the calcium dependent regulation of muscle contraction. The protein is Tropomyosin of Rhipicephalus microplus (Cattle tick).